A 577-amino-acid chain; its full sequence is MDPAFIFITGGVVSSLGKGIAAGAIGLLLKSRGISVVNQKFDPYLNGDPGTMNPYQHGEVFVTQDGGETDLDLGHYERFTDVPSSRFNSTTAGSVYRAILDRERAGGYGGATVQVIPHVTDEIQARIRAAAATTGARVVITEIGGTVGDIESLPFIEAIRQIRRVLGKERCLFIHLGLVPYLPSCGEMKTKPLQHSVKELLGLGVQPDVILCRSERHITDAVREKLSLFCNVERRAIVENVTARSIYEVPLLLEAEGLGALLCERLRLFDTCCGGQVARNLGAGGAQSAVLGAGGTVRTDGGLHPAAGQGAEPDLTAWRAMVRALYYPRRELTVALVGKYVSLADAYLSVSEALTAAGICHRARVDMRWIDAEEICSVQDAGHALADADALVIPGGFGVRGIEGMICAVSHARVQNLPYLGICLGMQIAVIEFARNVLLLASAHSREFAVDTPHPVVDLLPGCVDTPTGGSLRLGQYRCLLAEGSRARALYGRGEVWERHRHRYGLNAAYRARFEASALRPVGVDSDCGAVEVVEHGEHPWFFGVQFHPEFCSRPNRAHPLFRALVAAGLERKDSRS.

Residues 1-268 (MDPAFIFITG…GALLCERLRL (268 aa)) form an amidoligase domain region. Ser-14 is a binding site for CTP. Ser-14 is a UTP binding site. 15-20 (SLGKGI) is an ATP binding site. L-glutamine is bound at residue Tyr-55. Asp-72 serves as a coordination point for ATP. Mg(2+) contacts are provided by Asp-72 and Glu-142. CTP contacts are provided by residues 149–151 (DIE), 189–194 (KTKPLQ), and Lys-225. Residues 189 to 194 (KTKPLQ) and Lys-225 each bind UTP. The region spanning 333-575 (TVALVGKYVS…VAAGLERKDS (243 aa)) is the Glutamine amidotransferase type-1 domain. An L-glutamine-binding site is contributed by Gly-396. Catalysis depends on Cys-423, which acts as the Nucleophile; for glutamine hydrolysis. L-glutamine contacts are provided by residues 424-427 (LGMQ), Glu-447, and Arg-503. Active-site residues include His-548 and Glu-550.

This sequence belongs to the CTP synthase family. As to quaternary structure, homotetramer.

The catalysed reaction is UTP + L-glutamine + ATP + H2O = CTP + L-glutamate + ADP + phosphate + 2 H(+). It catalyses the reaction L-glutamine + H2O = L-glutamate + NH4(+). It carries out the reaction UTP + NH4(+) + ATP = CTP + ADP + phosphate + 2 H(+). It functions in the pathway pyrimidine metabolism; CTP biosynthesis via de novo pathway; CTP from UDP: step 2/2. With respect to regulation, allosterically activated by GTP, when glutamine is the substrate; GTP has no effect on the reaction when ammonia is the substrate. The allosteric effector GTP functions by stabilizing the protein conformation that binds the tetrahedral intermediate(s) formed during glutamine hydrolysis. Inhibited by the product CTP, via allosteric rather than competitive inhibition. Its function is as follows. Catalyzes the ATP-dependent amination of UTP to CTP with either L-glutamine or ammonia as the source of nitrogen. Regulates intracellular CTP levels through interactions with the four ribonucleotide triphosphates. This is CTP synthase from Treponema pallidum (strain Nichols).